A 341-amino-acid polypeptide reads, in one-letter code: Phenylalanine--tRNA ligase alpha subunit (341 aa).

Glu256 lines the Mg(2+) pocket.

The protein belongs to the class-II aminoacyl-tRNA synthetase family. Phe-tRNA synthetase alpha subunit type 1 subfamily. As to quaternary structure, tetramer of two alpha and two beta subunits. Mg(2+) is required as a cofactor.

The protein resides in the cytoplasm. It catalyses the reaction tRNA(Phe) + L-phenylalanine + ATP = L-phenylalanyl-tRNA(Phe) + AMP + diphosphate + H(+). The protein is Phenylalanine--tRNA ligase alpha subunit of Leptospira interrogans serogroup Icterohaemorrhagiae serovar Lai (strain 56601).